Here is a 588-residue protein sequence, read N- to C-terminus: DNA ligase (588 aa).

Residue Glu248 coordinates ATP. The active-site N6-AMP-lysine intermediate is the Lys250. ATP-binding residues include Arg255, Arg270, Glu300, Phe341, Arg418, and Lys424.

Belongs to the ATP-dependent DNA ligase family. The cofactor is Mg(2+).

The catalysed reaction is ATP + (deoxyribonucleotide)n-3'-hydroxyl + 5'-phospho-(deoxyribonucleotide)m = (deoxyribonucleotide)n+m + AMP + diphosphate.. Functionally, DNA ligase that seals nicks in double-stranded DNA during DNA replication, DNA recombination and DNA repair. The sequence is that of DNA ligase from Thermoplasma volcanium (strain ATCC 51530 / DSM 4299 / JCM 9571 / NBRC 15438 / GSS1).